The primary structure comprises 300 residues: MKFLSFKYNDKTSYGVKVKREDAVWDLTQVFADFAEGDFHPKTLLAGLQQNHTLDFQEQVRKAVVAAEDSGKAEDYKISFNDIEFLPPVTPPNNVIAFGRNYKDHANELNHEVEKLYVFTKAASSLTGDNATIPNHKDITDQLDYEGELGIVIGKSGEKIPKALALDYVYGYTIINDITDRKAQSEQDQAFLSKSLTGGCPMGPYIVTKDELPLPENVNIVTKVNNEIRQDGNTGEMILKIDELIEEISKYVALHPGDIIATGTPAGVGAGMQPPKFLQPGDEVKVTIDNIGTLTTYIAK.

3 residues coordinate a divalent metal cation: Glu146, Glu148, and Asp177.

It belongs to the FAH family.

This is an uncharacterized protein from Staphylococcus aureus (strain MW2).